We begin with the raw amino-acid sequence, 818 residues long: Actin filament-associated protein 1-like 2 (818 aa).

Tyrosine 56 carries the post-translational modification Phosphotyrosine. A disordered region spans residues 66–163; that stretch reads QNAESQGKAP…SKGKSAPYQW (98 aa). Residues 85 to 94 are compositionally biased toward polar residues; the sequence is EPSQHSSAPQ. Residues 123-139 are compositionally biased toward acidic residues; the sequence is YYEEAEPYDTSLNEDGE. 2 PH domains span residues 175–271 and 353–447; these read DARI…EVSG and SLET…SESG. Serine 408 is subject to Phosphoserine. The residue at position 413 (tyrosine 413) is a Phosphotyrosine. Position 484 is a phosphoserine (serine 484). The interval 513–532 is disordered; sequence AAVEPTEEATPVADDPNERE. A coiled-coil region spans residues 652–749; sequence AEIKLGKNRT…VKDNLKKAEA (98 aa). The disordered stretch occupies residues 765–787; sequence NVSPRPKAVTPASAPDCTPVNSA.

Interacts with SRC. Interacts with LCK when tyrosine phosphorylated. Post-translationally, tyrosine phosphorylated (by SRC). In terms of tissue distribution, detected in spleen and thyroid, and at lower levels in kidney, brain, lung and pancreas.

It is found in the cytoplasm. Functionally, may play a role in a signaling cascade by enhancing the kinase activity of SRC. Contributes to SRC-regulated transcription activation. This Homo sapiens (Human) protein is Actin filament-associated protein 1-like 2 (AFAP1L2).